A 439-amino-acid polypeptide reads, in one-letter code: MHFSIGSLFLYLIASASCTAASPQYIQRSRRTPFTTSTSKPSAFTNPSTDTATTPYVLELTKINNKGNARSAVELNSQVRSGSANLVSFAEGVGFATSINIGNQTFEVVIDTGSSDLWVVRDGFICIDPVSRKEVAQSECRFGPAYAPNTTFHEVVGEFVDIKYADGEILSGVIGTENVTLAGITVNQTIGVMDYAGWYGDGVTSGLMGLAYSSLASAYTTNNRQPRLYNPIFATMYEQGLIDPIFSMVMNRNASNGTAAGYLTLGGLPPVDINGNFSTTPILITNIKGYPKDYDFYAVNIDGVALGNRSLPEAAGGIQYIIDSGTTLNYYPTPVADSVNAAFIPPAVYNDYDGAYVVDCNATASVHGVMIGGSTFYINPTDMILPGGMDNSGNKTCISGINAGGDVGQGIFVLGGTFLRNVVAVFDVGAAEMRFAASA.

An N-terminal signal peptide occupies residues 1-20 (MHFSIGSLFLYLIASASCTA). The segment at 31–50 (RTPFTTSTSKPSAFTNPSTD) is disordered. Residues 32–45 (TPFTTSTSKPSAFT) show a composition bias toward low complexity. The Peptidase A1 domain maps to 95–436 (FATSINIGNQ…DVGAAEMRFA (342 aa)). Asparagine 103 carries an N-linked (GlcNAc...) asparagine glycan. Aspartate 111 is a catalytic residue. N-linked (GlcNAc...) asparagine glycosylation is found at asparagine 149, asparagine 178, asparagine 187, asparagine 253, asparagine 256, asparagine 276, and asparagine 308. The active site involves aspartate 323. N-linked (GlcNAc...) asparagine glycosylation is found at asparagine 361 and asparagine 394.

This sequence belongs to the peptidase A1 family.

The protein resides in the secreted. Probable aspartic-type endopeptidase which contributes to virulence. This is Probable aspartic-type endopeptidase AFUA_3G01220 from Aspergillus fumigatus (strain ATCC MYA-4609 / CBS 101355 / FGSC A1100 / Af293) (Neosartorya fumigata).